The chain runs to 571 residues: Proline--tRNA ligase (571 aa).

Belongs to the class-II aminoacyl-tRNA synthetase family. ProS type 1 subfamily. In terms of assembly, homodimer.

It localises to the cytoplasm. The catalysed reaction is tRNA(Pro) + L-proline + ATP = L-prolyl-tRNA(Pro) + AMP + diphosphate. Catalyzes the attachment of proline to tRNA(Pro) in a two-step reaction: proline is first activated by ATP to form Pro-AMP and then transferred to the acceptor end of tRNA(Pro). As ProRS can inadvertently accommodate and process non-cognate amino acids such as alanine and cysteine, to avoid such errors it has two additional distinct editing activities against alanine. One activity is designated as 'pretransfer' editing and involves the tRNA(Pro)-independent hydrolysis of activated Ala-AMP. The other activity is designated 'posttransfer' editing and involves deacylation of mischarged Ala-tRNA(Pro). The misacylated Cys-tRNA(Pro) is not edited by ProRS. The sequence is that of Proline--tRNA ligase from Pseudomonas syringae pv. syringae (strain B728a).